A 454-amino-acid polypeptide reads, in one-letter code: 5-hydroxytryptamine receptor 3D (454 aa).

An N-terminal signal peptide occupies residues 1 to 24 (MQKHSPGPPALALLSQSLLTTGNG). Residues 25 to 232 (DTLIINCPGF…IRRRCRPSPY (208 aa)) are Extracellular-facing. N-linked (GlcNAc...) asparagine glycosylation occurs at N66. The helical transmembrane segment at 233 to 253 (VVNFLVPSGILIAIDALSFYL) threads the bilayer. Topologically, residues 254–264 (PLESGNCAPFK) are cytoplasmic. A helical membrane pass occupies residues 265 to 285 (MTVLLGYSVFLLMMNDLLPAT). The Extracellular segment spans residues 286-306 (STSSHASLVAPLALMQTPLPA). Residues 307–327 (GVYFALCLSLMVGSLLETIFI) form a helical membrane-spanning segment. The Cytoplasmic portion of the chain corresponds to 328 to 431 (THLLHVATTQ…WVQFSHAMDA (104 aa)). Positions 363 to 410 (PQKGNKGPGLTPTHLPGVKEPEVSAGQMPGPGEAELTGGSEWTRAQRE) are disordered. The tract at residues 399 to 430 (TGGSEWTRAQREHEAQKQHSVELWVQFSHAMD) is HA-stretch; determines single-channel conductance in 5-HT3 receptors. A helical transmembrane segment spans residues 432–452 (LLFRLYLLFMASSIITVICLW). Over 453 to 454 (NT) the chain is Extracellular.

The protein belongs to the ligand-gated ion channel (TC 1.A.9) family. 5-hydroxytryptamine receptor (TC 1.A.9.2) subfamily. HTR3D sub-subfamily. Forms homopentameric as well as heteropentameric serotonin-activated cation-selective channel complexes with HTR3A. The homomeric complex is not functional. Heteropentameric complexes display properties which resemble that of neuronal serotonin-activated channels in vivo. In terms of tissue distribution, expressed in liver, as well as fetal and adult colon and kidney.

The protein resides in the postsynaptic cell membrane. The protein localises to the cell membrane. It carries out the reaction Na(+)(in) = Na(+)(out). It catalyses the reaction K(+)(in) = K(+)(out). The catalysed reaction is Ca(2+)(in) = Ca(2+)(out). Its function is as follows. Forms serotonin (5-hydroxytryptamine/5-HT3)-activated cation-selective channel complexes, which when activated cause fast, depolarizing responses in neurons. This Homo sapiens (Human) protein is 5-hydroxytryptamine receptor 3D.